Reading from the N-terminus, the 308-residue chain is MASWNQRTVAKRVSCTGVGLHSGRPATLTLAPAPADAGITFVRMDLGVEIPARNEHVVDTMLSTSLGRGGARVATVEHVMAALHGMGIDACRVEVDGPEIPILDGSAAPFTCLVQEAGVKVLPAGKRYLVVDQPVEIRDGDKLARLEPADGFSVSFTADFGHPLITDQSFQVKLGERAFEREVARARTFCFRRDIEKMQAMGLAKGGSLENAIVVDEFSILNPEGLRFPDEFARHKVLDAIGDLALFGMPVVGALVAVKSGHAMNQALVKKVLADPAAHRVVRVTGEADAPALRAKVPALAIHEGSAA.

Zn(2+)-binding residues include H78, H235, and D239. The active-site Proton donor is the H262.

It belongs to the LpxC family. Zn(2+) is required as a cofactor.

The enzyme catalyses a UDP-3-O-[(3R)-3-hydroxyacyl]-N-acetyl-alpha-D-glucosamine + H2O = a UDP-3-O-[(3R)-3-hydroxyacyl]-alpha-D-glucosamine + acetate. It participates in glycolipid biosynthesis; lipid IV(A) biosynthesis; lipid IV(A) from (3R)-3-hydroxytetradecanoyl-[acyl-carrier-protein] and UDP-N-acetyl-alpha-D-glucosamine: step 2/6. In terms of biological role, catalyzes the hydrolysis of UDP-3-O-myristoyl-N-acetylglucosamine to form UDP-3-O-myristoylglucosamine and acetate, the committed step in lipid A biosynthesis. The sequence is that of UDP-3-O-acyl-N-acetylglucosamine deacetylase from Anaeromyxobacter dehalogenans (strain 2CP-C).